The primary structure comprises 345 residues: Ubiquitin-associated domain-containing protein 2 (345 aa).

An N-terminal signal peptide occupies residues methionine 1–lysine 39. At phenylalanine 40–lysine 91 the chain is on the extracellular side. Residues phenylalanine 92–glutamate 112 form a helical membrane-spanning segment. The Cytoplasmic segment spans residues alanine 113–asparagine 125. A helical membrane pass occupies residues leucine 126–proline 146. At arginine 147 to threonine 163 the chain is on the extracellular side. Residue asparagine 161 is glycosylated (N-linked (GlcNAc...) asparagine). A helical membrane pass occupies residues leucine 164–methionine 184. The Cytoplasmic portion of the chain corresponds to serine 185–histidine 345. The segment at asparagine 287–valine 306 is disordered. Residues glutamate 305–histidine 345 enclose the UBA domain.

Interacts with LMBR1L, FAF2, AMFR and VCP.

It localises to the endoplasmic reticulum membrane. In terms of biological role, restricts trafficking of FAF2 from the endoplasmic reticulum to lipid droplets. In association with LMBR1L and E3 ubiquitin-protein ligase AMFR, negatively regulates the canonical Wnt signaling pathway in the lymphocytes by promoting the ubiquitin-mediated degradation of CTNNB1 and Wnt receptors FZD6 and LRP6. This Mus musculus (Mouse) protein is Ubiquitin-associated domain-containing protein 2 (Ubac2).